The sequence spans 418 residues: Ankyrin repeat and SOCS box protein 6 (418 aa).

ANK repeat units lie at residues 65 to 95, 100 to 129, 134 to 164, 168 to 203, 224 to 253, and 258 to 287; these read EGVS…NLNF, TYYT…DINR, HESS…DVNA, NGKT…DVKA, CGDK…DPSE, and ESLT…AYNC. An SOCS box domain is found at 358-413; the sequence is ALHASLRQLESYPPPLKHLCRVSIRLCLRPWPVDTKVKALPLPDRLKWYLLSAHSD.

This sequence belongs to the ankyrin SOCS box (ASB) family. In terms of assembly, binds APS. Identified in a complex with ELOB and ELOC. Interacts with CUL5 and RNF7. Interacts with SQSTM1. As to expression, detected in adipocytes.

It is found in the cytoplasm. It functions in the pathway protein modification; protein ubiquitination. Functionally, probable substrate-recognition component of a SCF-like ECS (Elongin-Cullin-SOCS-box protein) E3 ubiquitin-protein ligase complex which mediates the ubiquitination and subsequent proteasomal degradation of target proteins. May play a role in the regulation of cell proliferation and autophagy by promoting the ubiquitination and degradation of SQSTM1. The protein is Ankyrin repeat and SOCS box protein 6 (Asb6) of Mus musculus (Mouse).